Reading from the N-terminus, the 585-residue chain is UvrABC system protein C (585 aa).

The region spanning 15-90 (AEPGVYQFLE…IKRHQPRYNV (76 aa)) is the GIY-YIG domain. The 36-residue stretch at 198–233 (GILADPLRQEMQAAATAEEFERAANIRDRLAVIESF) folds into the UVR domain.

The protein belongs to the UvrC family. In terms of assembly, interacts with UvrB in an incision complex.

The protein localises to the cytoplasm. Its function is as follows. The UvrABC repair system catalyzes the recognition and processing of DNA lesions. UvrC both incises the 5' and 3' sides of the lesion. The N-terminal half is responsible for the 3' incision and the C-terminal half is responsible for the 5' incision. This chain is UvrABC system protein C, found in Haloquadratum walsbyi (strain DSM 16790 / HBSQ001).